We begin with the raw amino-acid sequence, 651 residues long: Forkhead box protein K2 (651 aa).

A compositionally biased stretch (low complexity) spans 1-13; the sequence is MAAAAALSGAGAP. The interval 1–29 is disordered; sequence MAAAAALSGAGAPPAGGGAGGGGSPPGGW. The segment covering 14-26 has biased composition (gly residues); the sequence is PAGGGAGGGGSPP. Phosphoserine is present on Ser-24. The FHA domain maps to 48–119; sequence VTIGRNSSQG…NGVFVDGVFQ (72 aa). Positions 120–162 are required for interaction with DVL2 and SUDS3; that stretch reads RRGAPPLQLPRVCTFRFPSTNIKITFTALSSEKREKQEAPESP. Arg-135 carries the omega-N-methylarginine modification. Disordered regions lie at residues 150–171 and 194–251; these read SEKR…PHIS and TISA…SKPP. Residues Lys-152 and Lys-155 each participate in a glycyl lysine isopeptide (Lys-Gly) (interchain with G-Cter in SUMO2) cross-link. The segment covering 194 to 203 has biased composition (polar residues); that stretch reads TISAANSCPS. The residue at position 230 (Ser-230) is a Phosphoserine. Over residues 233 to 249 the composition is skewed to basic and acidic residues; sequence ENEKEASGGDSPKDDSK. A DNA-binding region (fork-head) is located at residues 249-344; that stretch reads KPPYSYAQLI…EQAFRKRRPR (96 aa). The segment at 291–309 is DNA-binding; major groove; it reads KGWQNSIRHNLSLNRYFIK. Positions 301, 302, 304, and 307 each coordinate Mg(2+). DNA-binding; minor groove regions lie at residues 319–323 and 339–344; these read KGSFW and RKRRPR. The tract at residues 350 to 399 is disordered; that stretch reads RTPLGPLSSRSAPASPNHAGVLSAHSSGAQTPESLSREGSPAPLEPEPGA. A Phosphoserine modification is found at Ser-364. Positions 373 to 383 are enriched in polar residues; it reads AHSSGAQTPES. A phosphoserine mark is found at Ser-389, Ser-415, and Ser-419. Residue Lys-518 forms a Glycyl lysine isopeptide (Lys-Gly) (interchain with G-Cter in SUMO2) linkage. Ser-590 carries the post-translational modification Phosphoserine. A compositionally biased stretch (polar residues) spans 601–614; the sequence is ASASLPTKRQNGDQ. Positions 601-623 are disordered; it reads ASASLPTKRQNGDQAEQPELKRV. Lys-624 participates in a covalent cross-link: Glycyl lysine isopeptide (Lys-Gly) (interchain with G-Cter in SUMO2).

Component of SIN3A-, but not SIN3B-, containing multiprotein complexes. Interacts with DVL1, DVL2 (when phosphorylated) and DVL3; the interaction induces DVL2 nuclear translocation. Interacts with SUDS3. Interacts with BAP1 (when phosphorylated); leading to recruit the PR-DUB complex and repress FOXK2 target genes. Accessory component of the polycomb repressive deubiquitinase (PR-DUB) complex, at least composed of BAP1, one of ASXL1, ASXL2 or (probably) ASXL3 and one of MBD5 or MBD6. The PR-DUB core associates with a number of accessory proteins, including FOXK1, FOXK2, KDM1B, HCFC1 and OGT. Post-translationally, hyperphosphorylated during mitosis by CDK1 and, to a lower extent, CDK2. Phosphorylation at Ser-364 and Ser-419 affects stability by promoting degradation. In terms of tissue distribution, expressed in a wide range of adult brain regions, namely the piriform cortex, the major islands of Calleja and cells lining the lateral ventricles, the bed nucleus of stria terminalis, the paraventricular thalamic nucleus, habenula and all structures of the hippocampus. Also present in the hypothalamus, cerebral cortex and in the Purkinje cell layer in the cerebellum. Additionally expressed in dopamine neurons of the substantia and more sparsely in the ventral tegmental area.

It localises to the nucleus. It is found in the cytoplasm. Transcriptional regulator involved in different processes such as glucose metabolism, aerobic glycolysis and autophagy. Recognizes and binds the forkhead DNA sequence motif (5'-GTAAACA-3') and can both act as a transcription activator or repressor, depending on the context. Together with FOXK1, acts as a key regulator of metabolic reprogramming towards aerobic glycolysis, a process in which glucose is converted to lactate in the presence of oxygen. Acts by promoting expression of enzymes for glycolysis (such as hexokinase-2 (HK2), phosphofructokinase, pyruvate kinase (PKLR) and lactate dehydrogenase), while suppressing further oxidation of pyruvate in the mitochondria by up-regulating pyruvate dehydrogenase kinases PDK1 and PDK4. Probably plays a role in gluconeogenesis during overnight fasting, when lactate from white adipose tissue and muscle is the main substrate. Together with FOXK1, acts as a negative regulator of autophagy in skeletal muscle: in response to starvation, enters the nucleus, binds the promoters of autophagy genes and represses their expression, preventing proteolysis of skeletal muscle proteins. In addition to the 5'-GTAAACA-3' DNA motif, also binds the 5'-TGANTCA-3' palindromic DNA motif, and co-associates with JUN/AP-1 to activate transcription. Also able to bind to a minimal DNA heteroduplex containing a G/T-mismatch with 5'-TRT[G/T]NB-3' sequence. Binds to NFAT-like motifs (purine-rich) in the IL2 promoter. Positively regulates WNT/beta-catenin signaling by translocating DVL proteins into the nucleus. Accessory component of the polycomb repressive deubiquitinase (PR-DUB) complex; recruits the PR-DUB complex to specific FOXK2-bound genes. The protein is Forkhead box protein K2 of Mus musculus (Mouse).